A 252-amino-acid polypeptide reads, in one-letter code: Imidazole glycerol phosphate synthase subunit HisF (252 aa).

Active-site residues include Asp-11 and Asp-130.

It belongs to the HisA/HisF family. Heterodimer of HisH and HisF.

The protein localises to the cytoplasm. It catalyses the reaction 5-[(5-phospho-1-deoxy-D-ribulos-1-ylimino)methylamino]-1-(5-phospho-beta-D-ribosyl)imidazole-4-carboxamide + L-glutamine = D-erythro-1-(imidazol-4-yl)glycerol 3-phosphate + 5-amino-1-(5-phospho-beta-D-ribosyl)imidazole-4-carboxamide + L-glutamate + H(+). It participates in amino-acid biosynthesis; L-histidine biosynthesis; L-histidine from 5-phospho-alpha-D-ribose 1-diphosphate: step 5/9. Functionally, IGPS catalyzes the conversion of PRFAR and glutamine to IGP, AICAR and glutamate. The HisF subunit catalyzes the cyclization activity that produces IGP and AICAR from PRFAR using the ammonia provided by the HisH subunit. The chain is Imidazole glycerol phosphate synthase subunit HisF from Citrifermentans bemidjiense (strain ATCC BAA-1014 / DSM 16622 / JCM 12645 / Bem) (Geobacter bemidjiensis).